Consider the following 89-residue polypeptide: Small ribosomal subunit protein uS15 (89 aa).

The protein belongs to the universal ribosomal protein uS15 family. In terms of assembly, part of the 30S ribosomal subunit. Forms a bridge to the 50S subunit in the 70S ribosome, contacting the 23S rRNA.

Functionally, one of the primary rRNA binding proteins, it binds directly to 16S rRNA where it helps nucleate assembly of the platform of the 30S subunit by binding and bridging several RNA helices of the 16S rRNA. In terms of biological role, forms an intersubunit bridge (bridge B4) with the 23S rRNA of the 50S subunit in the ribosome. This is Small ribosomal subunit protein uS15 from Pseudoalteromonas atlantica (strain T6c / ATCC BAA-1087).